A 486-amino-acid chain; its full sequence is Vicilin-like seed storage protein At3g22640 (486 aa).

An N-terminal signal peptide occupies residues 1–22 (MAITNKLIITLLLLISIAVVHC). Residues 34–60 (PPQQGEQEGPRRRPGGGSGEGWEEEST) form a disordered region. 2 Cupin type-1 domains span residues 64–223 (YHFR…ELLG) and 278–448 (FNLF…KVAE). N-linked (GlcNAc...) asparagine glycans are attached at residues Asn168, Asn316, and Asn455.

Belongs to the 7S seed storage protein family. Predominantly expressed in the embryo and endosperm of developing seeds. Also present in seedlings.

Functionally, seed storage protein. (Microbial infection) Involved in tobacco mosaic virus (TMV) replication. Required for endoplasmic reticulum (ER) aggregations mediated by TMV main replicase (P126) upon viral infection. This chain is Vicilin-like seed storage protein At3g22640, found in Arabidopsis thaliana (Mouse-ear cress).